Here is an 85-residue protein sequence, read N- to C-terminus: MAHKKGGGSTHNGRDSKPKMLGVKKFGGELISAGAIIVRQRGTKFHPGVNVGIGKDHTLFALVDGHVAFTTKGAMNKPTVNVATA.

Residues 1 to 21 (MAHKKGGGSTHNGRDSKPKML) are disordered.

The protein belongs to the bacterial ribosomal protein bL27 family.

The polypeptide is Large ribosomal subunit protein bL27 (Albidiferax ferrireducens (strain ATCC BAA-621 / DSM 15236 / T118) (Rhodoferax ferrireducens)).